Reading from the N-terminus, the 472-residue chain is uncharacterized protein (472 aa).

The protein to B.subtilis YcdC.

This is an uncharacterized protein from Bacillus subtilis (strain 168).